The chain runs to 634 residues: uncharacterized protein (634 aa).

This is an uncharacterized protein from Homo sapiens (Human).